A 419-amino-acid chain; its full sequence is Gamma-glutamyl phosphate reductase (419 aa).

The protein belongs to the gamma-glutamyl phosphate reductase family.

It localises to the cytoplasm. The catalysed reaction is L-glutamate 5-semialdehyde + phosphate + NADP(+) = L-glutamyl 5-phosphate + NADPH + H(+). It participates in amino-acid biosynthesis; L-proline biosynthesis; L-glutamate 5-semialdehyde from L-glutamate: step 2/2. Its function is as follows. Catalyzes the NADPH-dependent reduction of L-glutamate 5-phosphate into L-glutamate 5-semialdehyde and phosphate. The product spontaneously undergoes cyclization to form 1-pyrroline-5-carboxylate. This Solidesulfovibrio magneticus (strain ATCC 700980 / DSM 13731 / RS-1) (Desulfovibrio magneticus) protein is Gamma-glutamyl phosphate reductase.